The primary structure comprises 379 residues: Protein RecA (379 aa).

79-86 (GPESSGKT) provides a ligand contact to ATP.

The protein belongs to the RecA family.

The protein localises to the cytoplasm. Can catalyze the hydrolysis of ATP in the presence of single-stranded DNA, the ATP-dependent uptake of single-stranded DNA by duplex DNA, and the ATP-dependent hybridization of homologous single-stranded DNAs. It interacts with LexA causing its activation and leading to its autocatalytic cleavage. This is Protein RecA from Streptococcus agalactiae.